The primary structure comprises 322 residues: Acetyl-coenzyme A carboxylase carboxyl transferase subunit beta (322 aa).

The CoA carboxyltransferase N-terminal domain occupies 24–293 (LWIKCPDTGQ…PAVEEIAASD (270 aa)).

It belongs to the AccD/PCCB family. As to quaternary structure, acetyl-CoA carboxylase is a heterohexamer composed of biotin carboxyl carrier protein (AccB), biotin carboxylase (AccC) and two subunits each of ACCase subunit alpha (AccA) and ACCase subunit beta (AccD).

It localises to the cytoplasm. It catalyses the reaction N(6)-carboxybiotinyl-L-lysyl-[protein] + acetyl-CoA = N(6)-biotinyl-L-lysyl-[protein] + malonyl-CoA. The protein operates within lipid metabolism; malonyl-CoA biosynthesis; malonyl-CoA from acetyl-CoA: step 1/1. In terms of biological role, component of the acetyl coenzyme A carboxylase (ACC) complex. Biotin carboxylase (BC) catalyzes the carboxylation of biotin on its carrier protein (BCCP) and then the CO(2) group is transferred by the transcarboxylase to acetyl-CoA to form malonyl-CoA. The sequence is that of Acetyl-coenzyme A carboxylase carboxyl transferase subunit beta from Rhodopseudomonas palustris (strain BisB5).